Consider the following 343-residue polypeptide: uncharacterized protein (343 aa).

It belongs to the IIV-6 219L family.

This is an uncharacterized protein from Invertebrate iridescent virus 6 (IIV-6).